A 208-amino-acid chain; its full sequence is Large ribosomal subunit protein bL25 (208 aa).

This sequence belongs to the bacterial ribosomal protein bL25 family. CTC subfamily. In terms of assembly, part of the 50S ribosomal subunit; part of the 5S rRNA/L5/L18/L25 subcomplex. Contacts the 5S rRNA. Binds to the 5S rRNA independently of L5 and L18.

In terms of biological role, this is one of the proteins that binds to the 5S RNA in the ribosome where it forms part of the central protuberance. The protein is Large ribosomal subunit protein bL25 of Leptothrix cholodnii (strain ATCC 51168 / LMG 8142 / SP-6) (Leptothrix discophora (strain SP-6)).